Here is a 242-residue protein sequence, read N- to C-terminus: Ribosomal RNA small subunit methyltransferase G (242 aa).

S-adenosyl-L-methionine contacts are provided by residues Gly78, Phe83, 129–130 (AE), and Arg148. Residues 221–242 (TKKRYPRKAGVPEKSPIGGKHD) are disordered.

This sequence belongs to the methyltransferase superfamily. RNA methyltransferase RsmG family.

The protein localises to the cytoplasm. Specifically methylates the N7 position of a guanine in 16S rRNA. The sequence is that of Ribosomal RNA small subunit methyltransferase G from Oenococcus oeni (strain ATCC BAA-331 / PSU-1).